We begin with the raw amino-acid sequence, 90 residues long: Accessory gland-specific peptide 26Ab (90 aa).

An N-terminal signal peptide occupies residues 1 to 21; the sequence is MNYFAVLCIFSCICFWQFSDA.

In terms of tissue distribution, main cells of the accessory glands of males.

It localises to the secreted. Its subcellular location is the extracellular space. Its function is as follows. This protein is transferred from male to female during mating and may affect egglaying and behavior after mating. The chain is Accessory gland-specific peptide 26Ab (Acp26Ab) from Drosophila simulans (Fruit fly).